The following is a 261-amino-acid chain: Indole-3-glycerol phosphate synthase (261 aa).

This sequence belongs to the TrpC family.

The enzyme catalyses 1-(2-carboxyphenylamino)-1-deoxy-D-ribulose 5-phosphate + H(+) = (1S,2R)-1-C-(indol-3-yl)glycerol 3-phosphate + CO2 + H2O. It functions in the pathway amino-acid biosynthesis; L-tryptophan biosynthesis; L-tryptophan from chorismate: step 4/5. In Burkholderia ambifaria (strain MC40-6), this protein is Indole-3-glycerol phosphate synthase.